The sequence spans 501 residues: O-phosphoseryl-tRNA(Sec) selenium transferase (501 aa).

A tetramerization region spans residues 1-44; that stretch reads MNRESFAAGERLVSPAYVRQGCEARRSHEHLIRLLLEKGKCPEN. Position 14 is a phosphoserine (Ser14). A pyridoxal 5'-phosphate-binding site is contributed by Arg75. Residues 96–106 form a phosphate loop (P-loop) region; the sequence is GRSGDISAVQP. Residues Arg97, Ser98, and Gln105 each coordinate substrate. Position 271 (Arg271) interacts with tRNA. At Lys284 the chain carries N6-(pyridoxal phosphate)lysine. A substrate-binding site is contributed by Arg313. The tRNA site is built by Arg398 and Lys463. The segment at 474 to 493 is SLA/LP epitope; that stretch reads DKTEDVDIEEMALKLDNVLL.

It belongs to the SepSecS family. Homotetramer formed by a catalytic dimer and a non-catalytic dimer serving as a binding platform that orients tRNASec for catalysis. Each tetramer binds the CCA ends of two tRNAs which point to the active sites of the catalytic dimer. Pyridoxal 5'-phosphate serves as cofactor. In terms of tissue distribution, primarily expressed in liver, pancreas, kidney and lung. Overexpressed in PHA-stimulated T-cells.

It localises to the cytoplasm. It catalyses the reaction O-phospho-L-seryl-tRNA(Sec) + selenophosphate + H2O = L-selenocysteinyl-tRNA(Sec) + 2 phosphate. The protein operates within aminoacyl-tRNA biosynthesis; selenocysteinyl-tRNA(Sec) biosynthesis; selenocysteinyl-tRNA(Sec) from L-seryl-tRNA(Sec) (archaeal/eukaryal route): step 2/2. In terms of biological role, converts O-phosphoseryl-tRNA(Sec) to selenocysteinyl-tRNA(Sec) required for selenoprotein biosynthesis. The protein is O-phosphoseryl-tRNA(Sec) selenium transferase (SEPSECS) of Homo sapiens (Human).